Here is a 358-residue protein sequence, read N- to C-terminus: GVVMYTTSSITATLGFPKDMWIGRSFIDFLHPKDANTFASQITNGLAIPKIVNDTQEKAQIFGTQGSTMVCRIRRYRGLSSGFGVKDTSVSYMPFLLKFRFRNISDDKGLVVYLVIQTVPFFSAYKTPNEILTQEVSFIMRHSANGNLEYIDPDCVPYLGYIPQDITNRNALVLYHPGDLPFLQEVYQAIVKEGSVTRSKSYRMVTQNGHFIKVETEWSAFINPWSRKLEFVNGKYYIIEGPANPDVFESPDPEKTPKLTEERKNQAQICRDDIIRIMNEVLTNPAEIAKQQMSKRCQELALFMEILQEEQPKAEEEFHLQTQDVDHTYYERDSVMLGGISPHHEYNDIKSSAETSLS.

2 PAS domains span residues 1–120 and 138–240; these read GVVM…QTVP and FIMR…YIIE.

Forms a heterodimer with timeless (TIM); the complex then translocates into the nucleus. Phosphorylated with a circadian rhythmicity.

The protein resides in the nucleus. Functionally, involved in the generation of biological rhythms. The biological cycle depends on the rhythmic formation and nuclear localization of the tim-per complex. Light induces the degradation of tim, which promotes elimination of per. Nuclear activity of the heterodimer coordinatively regulates per and tim transcription negative feedback loop. Behaves as a negative element in circadian transcriptional loop. Does not appear to bind DNA, suggesting indirect transcriptional inhibition. The chain is Period circadian protein (per) from Hyalophora cecropia (Cecropia moth).